The primary structure comprises 138 residues: Peptide methionine sulfoxide reductase MsrB (138 aa).

The MsrB domain maps to 15-137 (EAEWRAQLDP…NSASLGFEPR (123 aa)). The Zn(2+) site is built by cysteine 54, cysteine 57, cysteine 103, and cysteine 106. Catalysis depends on cysteine 126, which acts as the Nucleophile.

It belongs to the MsrB Met sulfoxide reductase family. It depends on Zn(2+) as a cofactor.

It carries out the reaction L-methionyl-[protein] + [thioredoxin]-disulfide + H2O = L-methionyl-(R)-S-oxide-[protein] + [thioredoxin]-dithiol. The polypeptide is Peptide methionine sulfoxide reductase MsrB (Methylibium petroleiphilum (strain ATCC BAA-1232 / LMG 22953 / PM1)).